Consider the following 434-residue polypeptide: MKPVKVGICGLGTVGGGTFNVLERNAEEIARRAGRGIEVAQIAARRPNPKCDTGATPITADIFDVACNPEIDVVVELIGGYTLAHELVLKAIENGKHVVTANKALIAVHGNEIFAKAREKGVIVAFEAAVAGGIPVIKAIREGLSANRINWLAGIINGTGNFILSEMREKGRTFPDVLAEAQALGYAEADPTFDVEGIDAAHKLTILASIAFGIPLQFDKAYTEGISKLTSADVNYADALGYRIKHLGVARRTESGFELRVHPTLIPSDRLIANVNGVMNAVMVNGDAVGSTLYYGAGAGMEPTASSVVADLVDVVRAMTSDPENRVPHLAFQPDALSDHPILPIEACESAYYLRIQAKDHPGVLAQVATILSERGINIESIMQKEAEEQDGLVPMILVTHRVIEQRINDAIAALEALEGVSGPVVRIRVEQLN.

Residues T13 and V14 each coordinate NADPH. 3 residues coordinate NAD(+): V14, A33, and A43. Residue V14 participates in NADP(+) binding. R45 contributes to the NADPH binding site. Residues R45, R46, and K103 each contribute to the NADP(+) site. Residue K103 coordinates NADPH. Residues E127, V130, G132, and I134 each contribute to the Na(+) site. Residues G185 and E188 each coordinate NADP(+). L-homoserine-binding residues include E188 and D199. Residue K203 is the Proton donor of the active site. G300 is a binding site for NADPH. G300 is a binding site for NAD(+). Residue G300 coordinates NADP(+). The ACT domain occupies 353–429; sequence YLRIQAKDHP…GVSGPVVRIR (77 aa).

This sequence belongs to the homoserine dehydrogenase family. A metal cation serves as cofactor.

It catalyses the reaction L-homoserine + NADP(+) = L-aspartate 4-semialdehyde + NADPH + H(+). The catalysed reaction is L-homoserine + NAD(+) = L-aspartate 4-semialdehyde + NADH + H(+). It functions in the pathway amino-acid biosynthesis; L-methionine biosynthesis via de novo pathway; L-homoserine from L-aspartate: step 3/3. It participates in amino-acid biosynthesis; L-threonine biosynthesis; L-threonine from L-aspartate: step 3/5. Feedback inhibition by threonine. In terms of biological role, catalyzes the conversion of L-aspartate-beta-semialdehyde (L-Asa) to L-homoserine (L-Hse), the third step in the biosynthesis of threonine and methionine from aspartate. This chain is Homoserine dehydrogenase (hom), found in Pseudomonas aeruginosa (strain ATCC 15692 / DSM 22644 / CIP 104116 / JCM 14847 / LMG 12228 / 1C / PRS 101 / PAO1).